Here is a 165-residue protein sequence, read N- to C-terminus: Small ribosomal subunit protein uS5 (165 aa).

Residues 10-73 enclose the S5 DRBM domain; the sequence is LVEKLVAVDR…EAARRNMITV (64 aa).

It belongs to the universal ribosomal protein uS5 family. Part of the 30S ribosomal subunit. Contacts proteins S4 and S8.

Its function is as follows. With S4 and S12 plays an important role in translational accuracy. Located at the back of the 30S subunit body where it stabilizes the conformation of the head with respect to the body. The sequence is that of Small ribosomal subunit protein uS5 from Acinetobacter baylyi (strain ATCC 33305 / BD413 / ADP1).